A 219-amino-acid chain; its full sequence is Transmembrane protein 17A (219 aa).

2 N-linked (GlcNAc...) asparagine glycosylation sites follow: asparagine 18 and asparagine 27. A run of 4 helical transmembrane segments spans residues 56–76 (MMLYFNMFFFPFWWISELLML), 83–103 (LPVYYQCLLVTGMVLISIFEV), 121–141 (LAGFWLISFLFQLPILLFFIT), and 153–173 (AVHSLYLAFLLGELMASFLAL).

The protein belongs to the TMEM17 family. In terms of assembly, part of the tectonic-like complex (also named B9 complex).

The protein resides in the cell projection. Its subcellular location is the cilium membrane. In terms of biological role, transmembrane component of the tectonic-like complex, a complex localized at the transition zone of primary cilia and acting as a barrier that prevents diffusion of transmembrane proteins between the cilia and plasma membranes. Required for ciliogenesis and sonic hedgehog/SHH signaling. The protein is Transmembrane protein 17A (tmem17a) of Danio rerio (Zebrafish).